The following is a 227-amino-acid chain: 7-cyano-7-deazaguanine synthase (227 aa).

Position 16–26 (16–26 (FSGGQDSTTCL)) interacts with ATP. Zn(2+)-binding residues include Cys194, Cys202, Cys205, and Cys208.

Belongs to the QueC family. Requires Zn(2+) as cofactor.

The enzyme catalyses 7-carboxy-7-deazaguanine + NH4(+) + ATP = 7-cyano-7-deazaguanine + ADP + phosphate + H2O + H(+). It functions in the pathway purine metabolism; 7-cyano-7-deazaguanine biosynthesis. Its function is as follows. Catalyzes the ATP-dependent conversion of 7-carboxy-7-deazaguanine (CDG) to 7-cyano-7-deazaguanine (preQ(0)). This is 7-cyano-7-deazaguanine synthase from Haemophilus influenzae (strain PittEE).